A 168-amino-acid polypeptide reads, in one-letter code: Transcriptional regulator MraZ (168 aa).

2 consecutive SpoVT-AbrB domains span residues 8 to 51 (EYNQ…GGDR) and 90 to 140 (ALNM…KADI).

It belongs to the MraZ family. As to quaternary structure, forms oligomers.

It localises to the cytoplasm. It is found in the nucleoid. This chain is Transcriptional regulator MraZ, found in Cereibacter sphaeroides (strain KD131 / KCTC 12085) (Rhodobacter sphaeroides).